Consider the following 421-residue polypeptide: Uracil permease (421 aa).

Helical transmembrane passes span 18–38, 41–61, 65–85, 89–109, 115–135, 160–180, 186–206, 232–252, 304–324, 329–349, 371–391, and 393–413; these read IPLSLQHLFAMFGSTVLVPML, INPAICLLMNGIGTLIYIFLC, IPAYLGSSFAFISPVLIVIST, EAALSGFLVVGLVFCLIGLLV, GWIEIVFPPAAMGAIVAVIGL, PKVIAVSLVTLLTAVVGNVMF, IIPILISIIVGYALAAFLGIV, IAIIVPAALVVVAEHIGHLIV, VYSIWIIGGAAVMAIVLSFVG, LIQTIPVPVMGGVSILLFGVI, ILTAVVLIIGISGAAFKWGNF, and MKGMALATVIAILLGLFFNII.

Belongs to the nucleobase:cation symporter-2 (NCS2) (TC 2.A.40) family.

Its subcellular location is the cell membrane. Inhibited by the proton gradient disruptor carbonyl cyanide m-chlorophenylhydrazone (CCCP), but not by the sodium gradient disruptor ouabain. Both xanthine and uric acid act as competitive inhibitors of uracil transport. Its function is as follows. Specific for the uptake of uracil. Transport is probably proton-dependent. The protein is Uracil permease of Paenibacillus larvae subsp. larvae (strain NRRL B-3650 / LMG 16245).